The following is a 472-amino-acid chain: Putative cytochrome P450 135B1 (472 aa).

Cys388 provides a ligand contact to heme. Positions 442–472 (RDVSATSQATAQGAGCPAARGGGPSRAVGSQ) are disordered. The segment covering 452–472 (AQGAGCPAARGGGPSRAVGSQ) has biased composition (low complexity).

This sequence belongs to the cytochrome P450 family. Requires heme as cofactor.

The chain is Putative cytochrome P450 135B1 (cyp135B1) from Mycobacterium bovis (strain ATCC BAA-935 / AF2122/97).